The sequence spans 273 residues: Phosphate import ATP-binding protein PstB (273 aa).

The ABC transporter domain occupies 27 to 268; that stretch reads VTVRDLNFYY…PSDRRTQDYI (242 aa). ATP is bound at residue 59-66; it reads GPSGCGKS.

Belongs to the ABC transporter superfamily. Phosphate importer (TC 3.A.1.7) family. As to quaternary structure, the complex is composed of two ATP-binding proteins (PstB), two transmembrane proteins (PstC and PstA) and a solute-binding protein (PstS).

Its subcellular location is the cell inner membrane. The catalysed reaction is phosphate(out) + ATP + H2O = ADP + 2 phosphate(in) + H(+). Its function is as follows. Part of the ABC transporter complex PstSACB involved in phosphate import. Responsible for energy coupling to the transport system. This Rhodopseudomonas palustris (strain ATCC BAA-98 / CGA009) protein is Phosphate import ATP-binding protein PstB.